The following is a 320-amino-acid chain: Atrochrysone carboxyl ACP thioesterase (320 aa).

Residues His-103, His-105, Asp-107, and His-108 each coordinate Zn(2+). Residue Asp-107 is the Proton donor/acceptor of the active site.

It belongs to the metallo-beta-lactamase superfamily. Zn(2+) serves as cofactor.

The enzyme catalyses atrochrysone carboxyl-[ACP] + H2O = atrochrysone carboxylate + holo-[ACP] + H(+). Its pathway is secondary metabolite biosynthesis. In terms of biological role, atrochrysone carboxyl ACP thioesterase; part of the gene cluster that mediates the biosynthesis of geodin, an intermediate in the biosynthesis of other natural products. The pathway begins with the synthesis of atrochrysone thioester by the polyketide synthase (PKS) gedC. The atrochrysone carboxyl ACP thioesterase gedB then breaks the thioester bond and releases the atrochrysone carboxylic acid from gedC. The atrochrysone carboxylic acid is then converted to atrochrysone which is further transformed into emodinanthrone. The next step is performed by the emodinanthrone oxygenase gedH that catalyzes the oxidation of emodinanthrone to emodin. Emodin O-methyltransferase encoded probably by gedA then catalyzes methylation of the 8-hydroxy group of emodin to form questin. Ring cleavage of questin by questin oxidase gedK leads to desmethylsulochrin via several intermediates including questin epoxide. Another methylation step probably catalyzed by methyltransferase gedG leads to the formation of sulochrin which is further converted to dihydrogeodin by the sulochrin halogenase gedL. Finally, the dihydrogeodin oxidase gedJ catalyzes the stereospecific phenol oxidative coupling reaction converting dihydrogeodin to geodin. In Aspergillus terreus (strain NIH 2624 / FGSC A1156), this protein is Atrochrysone carboxyl ACP thioesterase.